We begin with the raw amino-acid sequence, 282 residues long: Kallikrein-11 (282 aa).

The signal sequence occupies residues 1-50 (MQRLRWLRDWKSSGRGLTAAKEPGARSSPLQAMRILQLILLALATGLVGG). Residues 51–53 (ETR) constitute a propeptide, activation peptide. Residues 53–280 (RIIKGFECKP…YVDWIQETMK (228 aa)) form the Peptidase S1 domain. 6 disulfide bridges follow: Cys-60–Cys-195, Cys-79–Cys-95, Cys-167–Cys-269, Cys-174–Cys-241, Cys-206–Cys-220, and Cys-231–Cys-256. His-94 acts as the Charge relay system in catalysis. Asn-131 carries an N-linked (GlcNAc...) asparagine glycan. Asp-142 serves as the catalytic Charge relay system. N-linked (GlcNAc...) asparagine glycans are attached at residues Asn-197 and Asn-213. Ser-235 functions as the Charge relay system in the catalytic mechanism. Asn-242 carries N-linked (GlcNAc...) asparagine glycosylation.

Belongs to the peptidase S1 family. Kallikrein subfamily. About 40% of KLK11 is inactivated by internal cleavage after Arg-188. This proteolytic inactivation may be effected by plasminogen. As to expression, expressed in brain, skin and prostate. Isoform 1 is expressed preferentially in brain. Isoform 2 is expressed in prostate. Present in seminal plasma at concentrations ranging from 2 to 37 microg/mL (at protein level).

It localises to the secreted. Its subcellular location is the golgi apparatus. Possible multifunctional protease. Efficiently cleaves 'bz-Phe-Arg-4-methylcoumaryl-7-amide', a kallikrein substrate, and weakly cleaves other substrates for kallikrein and trypsin. Cleaves synthetic peptides after arginine but not lysine residues. In Homo sapiens (Human), this protein is Kallikrein-11 (KLK11).